A 243-amino-acid chain; its full sequence is Venom nerve growth factor 1 (243 aa).

Positions 1-18 are cleaved as a signal peptide; sequence MSMLCYTLIIAFLIGIWA. Positions 19-125 are excised as a propeptide; that stretch reads APKSEDNVPL…TLNRNIRAKR (107 aa). A compositionally biased stretch (basic and acidic residues) spans 47–66; it reads GLKTSRNTDQRHPAPKKAED. Residues 47–69 are disordered; the sequence is GLKTSRNTDQRHPAPKKAEDQEL. Disulfide bonds link cysteine 139-cysteine 204, cysteine 182-cysteine 232, and cysteine 192-cysteine 234. A glycan (N-linked (GlcNAc...) asparagine) is linked at asparagine 148.

The protein belongs to the NGF-beta family. As to quaternary structure, homodimer; non-covalently linked. In terms of tissue distribution, expressed by the venom gland.

Its subcellular location is the secreted. In terms of biological role, nerve growth factor is important for the development and maintenance of the sympathetic and sensory nervous systems. It stimulates division and differentiation of sympathetic and embryonic sensory neurons as well as basal forebrain cholinergic neurons in the brain. Its relevance in the snake venom is not clear. However, it has been shown to inhibit metalloproteinase-dependent proteolysis of platelet glycoprotein Ib alpha, suggesting a metalloproteinase inhibition to prevent metalloprotease autodigestion and/or protection against prey proteases. Binds a lipid between the two protein chains in the homodimer. The lipid-bound form promotes histamine relase from mouse mast cells, contrary to the lipid-free form. In Pseudonaja textilis (Eastern brown snake), this protein is Venom nerve growth factor 1.